Here is a 123-residue protein sequence, read N- to C-terminus: Small ribosomal subunit protein uS12 (123 aa).

3-methylthioaspartic acid is present on Asp-89. Residues 100-123 (GSLDTSGVKGRNQGRSKYGTKRPK) form a disordered region. A compositionally biased stretch (basic residues) spans 111-123 (NQGRSKYGTKRPK).

Belongs to the universal ribosomal protein uS12 family. As to quaternary structure, part of the 30S ribosomal subunit. Contacts proteins S8 and S17. May interact with IF1 in the 30S initiation complex.

In terms of biological role, with S4 and S5 plays an important role in translational accuracy. Functionally, interacts with and stabilizes bases of the 16S rRNA that are involved in tRNA selection in the A site and with the mRNA backbone. Located at the interface of the 30S and 50S subunits, it traverses the body of the 30S subunit contacting proteins on the other side and probably holding the rRNA structure together. The combined cluster of proteins S8, S12 and S17 appears to hold together the shoulder and platform of the 30S subunit. The protein is Small ribosomal subunit protein uS12 of Pseudomonas fluorescens (strain ATCC BAA-477 / NRRL B-23932 / Pf-5).